Consider the following 128-residue polypeptide: MANTPEDTQNTQNDSQNDSQNDSQKDTSARATSARAHQQPQEQPPSPMRVLRGACAQLAELTGMEAESVSSFERTEDGWTLNVEVLELARVPDTMSLLASYEVELDAHGELSGYRRVRRYERGRSDRS.

The disordered stretch occupies residues 1–49; the sequence is MANTPEDTQNTQNDSQNDSQNDSQKDTSARATSARAHQQPQEQPPSPMR. The segment covering 7–22 has biased composition (low complexity); it reads DTQNTQNDSQNDSQND. Polar residues predominate over residues 29–41; sequence ARATSARAHQQPQ.

Belongs to the gas vesicle GvpO family.

The protein resides in the gas vesicle. In terms of biological role, a minor component of the gas vesicle. May play a role in transcription and/or RNA stability and in GV assembly. Gas vesicles are hollow, gas filled proteinaceous nanostructures found in some microorganisms. It is not clear what function gas vesicles perform in soil bacteria. In Streptomyces sp. (strain CB03234), this protein is Gas vesicle protein O.